The following is a 313-amino-acid chain: Porphobilinogen deaminase (313 aa).

Cys242 bears the S-(dipyrrolylmethanemethyl)cysteine mark.

It belongs to the HMBS family. As to quaternary structure, monomer. Dipyrromethane serves as cofactor.

The enzyme catalyses 4 porphobilinogen + H2O = hydroxymethylbilane + 4 NH4(+). It participates in porphyrin-containing compound metabolism; protoporphyrin-IX biosynthesis; coproporphyrinogen-III from 5-aminolevulinate: step 2/4. Tetrapolymerization of the monopyrrole PBG into the hydroxymethylbilane pre-uroporphyrinogen in several discrete steps. This is Porphobilinogen deaminase from Pseudomonas entomophila (strain L48).